The primary structure comprises 487 residues: N-succinylglutamate 5-semialdehyde dehydrogenase (487 aa).

221–226 (GSSDTG) contributes to the NAD(+) binding site. Catalysis depends on residues Glu-244 and Cys-278.

The protein belongs to the aldehyde dehydrogenase family. AstD subfamily.

It carries out the reaction N-succinyl-L-glutamate 5-semialdehyde + NAD(+) + H2O = N-succinyl-L-glutamate + NADH + 2 H(+). It participates in amino-acid degradation; L-arginine degradation via AST pathway; L-glutamate and succinate from L-arginine: step 4/5. Catalyzes the NAD-dependent reduction of succinylglutamate semialdehyde into succinylglutamate. This chain is N-succinylglutamate 5-semialdehyde dehydrogenase, found in Burkholderia ambifaria (strain MC40-6).